The following is a 172-amino-acid chain: Probable chorismate pyruvate-lyase (172 aa).

M37, R79, L117, and E158 together coordinate substrate.

The protein belongs to the UbiC family.

The protein localises to the cytoplasm. It catalyses the reaction chorismate = 4-hydroxybenzoate + pyruvate. It participates in cofactor biosynthesis; ubiquinone biosynthesis. In terms of biological role, removes the pyruvyl group from chorismate, with concomitant aromatization of the ring, to provide 4-hydroxybenzoate (4HB) for the ubiquinone pathway. This is Probable chorismate pyruvate-lyase from Bartonella quintana (strain Toulouse) (Rochalimaea quintana).